We begin with the raw amino-acid sequence, 218 residues long: DNA-directed RNA polymerase III subunit RPC7-like (218 aa).

The segment at 130–218 (TIILPKRPPK…SDDNMDEAIY (89 aa)) is disordered. The span at 139-160 (KTTEDKEETIQKLETLEKKEEE) shows a compositional bias: basic and acidic residues. 2 stretches are compositionally biased toward acidic residues: residues 161–193 (VTSE…EETD) and 201–218 (NGED…EAIY).

It belongs to the eukaryotic RPC7 RNA polymerase subunit family. As to quaternary structure, component of the RNA polymerase III (Pol III) complex consisting of 17 subunits. Pol III exists as two alternative complexes defined by the mutually exclusive incorporation of subunit POLR3G/RPC7alpha or POLR3GL/RPC7beta. Found in a trimeric complex with POLR3C/RPC3 and POLR3F/RPC6. Directly interacts with POLR3C.

It is found in the nucleus. DNA-dependent RNA polymerase catalyzes the transcription of DNA into RNA using the four ribonucleoside triphosphates as substrates. Specific peripheric component of RNA polymerase III which synthesizes small RNAs, such as 5S rRNA and tRNAs. This is DNA-directed RNA polymerase III subunit RPC7-like (POLR3GL) from Bos taurus (Bovine).